Consider the following 146-residue polypeptide: Hemoglobin subunit beta (146 aa).

The 145-residue stretch at 2–146 (HWTADEKQLI…VAHALALGYH (145 aa)) folds into the Globin domain. Residues His-63 and His-92 each coordinate heme b.

This sequence belongs to the globin family. Heterotetramer of two alpha chains and two beta chains. Red blood cells.

Functionally, involved in oxygen transport from the lung to the various peripheral tissues. The sequence is that of Hemoglobin subunit beta (HBB) from Chrysemys picta bellii (Western painted turtle).